The primary structure comprises 505 residues: OVARIAN TUMOR DOMAIN-containing deubiquitinating enzyme 6 (505 aa).

The interval Met1–Tyr191 is disordered. The span at Gly9–Ser30 shows a compositional bias: low complexity. Residues Asp51–Ala72 show a composition bias toward basic and acidic residues. Acidic residues predominate over residues Val73–Gly86. Over residues Pro115–Pro124 the composition is skewed to pro residues. Positions Ser159–Arg173 are enriched in low complexity. Over residues Ser174 to Met188 the composition is skewed to basic and acidic residues. One can recognise an OTU domain in the interval Phe216–Pro339. Residue Asp224 is part of the active site. The active-site Nucleophile is Cys227. His332 is a catalytic residue. The interval Arg416 to Val447 is disordered. Residues Glu421–Ser441 show a composition bias toward low complexity. The 46-residue stretch at Ala446–Thr491 folds into the UBA domain.

The protein belongs to the peptidase C85 family. As to quaternary structure, interacts with KDM1C. In terms of tissue distribution, mostly expressed in stems flowers and siliques, and, to a lower extent, in leaves, roots and seedlings.

The protein resides in the nucleus. Its subcellular location is the cytoplasm. The catalysed reaction is Thiol-dependent hydrolysis of ester, thioester, amide, peptide and isopeptide bonds formed by the C-terminal Gly of ubiquitin (a 76-residue protein attached to proteins as an intracellular targeting signal).. In terms of biological role, hydrolase that can remove conjugated ubiquitin from proteins in vitro and may therefore play an important regulatory role at the level of protein turnover by preventing degradation. Binds chromatin (e.g. nucleosomes and histones) and has enzymatic histone deubiquitinase activity, specific for the H2B histone. Can both repress (e.g. OSR2) and promote (e.g. AN3) the expression of target genes by associating with chromatin, deubiquitinating H2B and regulating its euchromatic histone marks (e.g. H3ac and H3K4me). In association with LDL1/KDM1C, involved in transcriptional gene repression via histone deubiquitination and demethylation. Promotes the concerted epigenetic regulation and repression (e.g. the removal of euchromatic histone acetylation, ubiquitination, and methylation marks) of a set of genes (e.g. GA20OX, WUS, OSR2, ARL and ABI5) that collectively limit plant growth thus stimulating plant growth and increasing cell size. The chain is OVARIAN TUMOR DOMAIN-containing deubiquitinating enzyme 6 from Arabidopsis thaliana (Mouse-ear cress).